A 233-amino-acid chain; its full sequence is Large ribosomal subunit protein uL1 (233 aa).

The protein belongs to the universal ribosomal protein uL1 family. In terms of assembly, part of the 50S ribosomal subunit.

Its function is as follows. Binds directly to 23S rRNA. The L1 stalk is quite mobile in the ribosome, and is involved in E site tRNA release. Functionally, protein L1 is also a translational repressor protein, it controls the translation of the L11 operon by binding to its mRNA. The sequence is that of Large ribosomal subunit protein uL1 from Brucella anthropi (strain ATCC 49188 / DSM 6882 / CCUG 24695 / JCM 21032 / LMG 3331 / NBRC 15819 / NCTC 12168 / Alc 37) (Ochrobactrum anthropi).